Consider the following 147-residue polypeptide: Hemoglobin subunit beta-2 (147 aa).

Val2 carries the N-acetylvaline modification. In terms of domain architecture, Globin spans 3–147 (HLTDAEKATV…VASALAHKYH (145 aa)). Phosphoserine is present on Ser13. An N6-succinyllysine modification is found at Lys18. Ser51 and Ser53 each carry phosphoserine. Heme b is bound by residues His64 and His93. At Arg105 the chain carries Asymmetric dimethylarginine. Phosphothreonine is present on Thr124. Cys126 is modified (phosphoserine; in variant Ser-126).

It belongs to the globin family. In terms of assembly, heterotetramer of two alpha chains and two beta chains. Red blood cells.

In terms of biological role, involved in oxygen transport from the lung to the various peripheral tissues. The sequence is that of Hemoglobin subunit beta-2 from Rattus norvegicus (Rat).